The sequence spans 189 residues: Protein C1orf43 homolog (189 aa).

The chain crosses the membrane as a helical span at residues 11 to 31 (VNVVLVMAYGSLVFVLLFIFV).

The protein localises to the membrane. The protein resides in the golgi apparatus. It is found in the mitochondrion. General regulator of phagocytosis. Required to uptake Gram negative bacterium by macrophages. The chain is Protein C1orf43 homolog from Pongo abelii (Sumatran orangutan).